The primary structure comprises 402 residues: uncharacterized protein (402 aa).

12 helical membrane passes run 26–46 (IFMS…AIAY), 67–87 (VALA…YVGF), 96–116 (FAAF…LTII), 126–146 (TVSI…NGTL), 168–188 (LFIL…IGFL), 213–233 (YVAY…MIDS), 235–255 (LFLL…GGYG), 289–309 (PIVI…GSII), 312–332 (ISVF…FDSL), 338–358 (FKNI…AVTI), 360–380 (FALL…SFLL), and 381–401 (LYKK…GYLI).

The protein belongs to the chromate ion transporter (CHR) (TC 2.A.51) family.

Its subcellular location is the cell membrane. This is an uncharacterized protein from Methanocaldococcus jannaschii (strain ATCC 43067 / DSM 2661 / JAL-1 / JCM 10045 / NBRC 100440) (Methanococcus jannaschii).